Here is a 184-residue protein sequence, read N- to C-terminus: Large ribosomal subunit protein uL6 (184 aa).

Belongs to the universal ribosomal protein uL6 family. Part of the 50S ribosomal subunit.

Its function is as follows. This protein binds to the 23S rRNA, and is important in its secondary structure. It is located near the subunit interface in the base of the L7/L12 stalk, and near the tRNA binding site of the peptidyltransferase center. This chain is Large ribosomal subunit protein uL6, found in Aster yellows witches'-broom phytoplasma (strain AYWB).